Consider the following 277-residue polypeptide: Large ribosomal subunit protein uL2 (277 aa).

The segment at 222–277 (GVAMNPVDHPHGGGEGRTSGGRHPVSPWGKSTKGKRTRSNKATDKFIMHTRHQRKK) is disordered.

It belongs to the universal ribosomal protein uL2 family. As to quaternary structure, part of the 50S ribosomal subunit. Forms a bridge to the 30S subunit in the 70S ribosome.

In terms of biological role, one of the primary rRNA binding proteins. Required for association of the 30S and 50S subunits to form the 70S ribosome, for tRNA binding and peptide bond formation. It has been suggested to have peptidyltransferase activity; this is somewhat controversial. Makes several contacts with the 16S rRNA in the 70S ribosome. This Bartonella quintana (strain Toulouse) (Rochalimaea quintana) protein is Large ribosomal subunit protein uL2.